A 180-amino-acid polypeptide reads, in one-letter code: Pro-glucagon (180 aa).

The N-terminal stretch at 1–20 (MKNIYIVAGFFVVLVQGSWQ) is a signal peptide. A disordered region spans residues 25 to 59 (DTEEKSRSFPASQTDPLEDPDQINEDKRHSQGTFT). Serine 54 carries the phosphoserine modification. A propeptide spanning residues 84 to 89 (NRNNIA) is cleaved from the precursor. 2 positions are modified to phosphoserine: serine 105 and serine 108. Arginine 127 is subject to Arginine amide. Residues 131-145 (DFPEEVTIVEELGRR) constitute a propeptide that is removed on maturation. Phosphoserine occurs at positions 150 and 152.

Belongs to the glucagon family. Proglucagon is post-translationally processed in a tissue-specific manner in pancreatic A cells and intestinal L cells. In pancreatic A cells, the major bioactive hormone is glucagon cleaved by PCSK2/PC2. In the intestinal L cells PCSK1/PC1 liberates GLP-1, GLP-2, glicentin and oxyntomodulin. GLP-1 is further N-terminally truncated by post-translational processing in the intestinal L cells resulting in GLP-1(7-37) GLP-1-(7-36)amide. The C-terminal amidation is neither important for the metabolism of GLP-1 nor for its effects on the endocrine pancreas.

Its subcellular location is the secreted. Functionally, plays a key role in glucose metabolism and homeostasis. Regulates blood glucose by increasing gluconeogenesis and decreasing glycolysis. A counterregulatory hormone of insulin, raises plasma glucose levels in response to insulin-induced hypoglycemia. Plays an important role in initiating and maintaining hyperglycemic conditions in diabetes. In terms of biological role, potent stimulator of glucose-dependent insulin release. Also stimulates insulin release in response to IL6. Plays important roles on gastric motility and the suppression of plasma glucagon levels. May be involved in the suppression of satiety and stimulation of glucose disposal in peripheral tissues, independent of the actions of insulin. Has growth-promoting activities on intestinal epithelium. May also regulate the hypothalamic pituitary axis (HPA) via effects on LH, TSH, CRH, oxytocin, and vasopressin secretion. Increases islet mass through stimulation of islet neogenesis and pancreatic beta cell proliferation. Inhibits beta cell apoptosis. Its function is as follows. Stimulates intestinal growth and up-regulates villus height in the small intestine, concomitant with increased crypt cell proliferation and decreased enterocyte apoptosis. The gastrointestinal tract, from the stomach to the colon is the principal target for GLP-2 action. Plays a key role in nutrient homeostasis, enhancing nutrient assimilation through enhanced gastrointestinal function, as well as increasing nutrient disposal. Stimulates intestinal glucose transport and decreases mucosal permeability. Significantly reduces food intake. Inhibits gastric emptying in humans. Suppression of gastric emptying may lead to increased gastric distension, which may contribute to satiety by causing a sensation of fullness. Functionally, may modulate gastric acid secretion and the gastro-pyloro-duodenal activity. May play an important role in intestinal mucosal growth in the early period of life. This Mesocricetus auratus (Golden hamster) protein is Pro-glucagon (GCG).